The sequence spans 123 residues: Fluoride-specific ion channel FluC (123 aa).

Helical transmembrane passes span 4-24, 31-51, 64-83, and 100-120; these read VYIA…SGWV, ALPY…GLLM, IRMG…STFS, and ANIL…IFLA. Residues G74 and T77 each coordinate Na(+).

The protein belongs to the fluoride channel Fluc/FEX (TC 1.A.43) family.

The protein localises to the cell inner membrane. It catalyses the reaction fluoride(in) = fluoride(out). Its activity is regulated as follows. Na(+) is not transported, but it plays an essential structural role and its presence is essential for fluoride channel function. Functionally, fluoride-specific ion channel. Important for reducing fluoride concentration in the cell, thus reducing its toxicity. The protein is Fluoride-specific ion channel FluC of Syntrophotalea carbinolica (strain DSM 2380 / NBRC 103641 / GraBd1) (Pelobacter carbinolicus).